The chain runs to 78 residues: Acyl carrier protein (78 aa).

The region spanning 2 to 77 is the Carrier domain; sequence STIEERVKKI…AAIDFIQANQ (76 aa). At Ser37 the chain carries O-(pantetheine 4'-phosphoryl)serine.

It belongs to the acyl carrier protein (ACP) family. 4'-phosphopantetheine is transferred from CoA to a specific serine of apo-ACP by AcpS. This modification is essential for activity because fatty acids are bound in thioester linkage to the sulfhydryl of the prosthetic group.

It is found in the cytoplasm. It participates in lipid metabolism; fatty acid biosynthesis. Carrier of the growing fatty acid chain in fatty acid biosynthesis. This Pectobacterium atrosepticum (strain SCRI 1043 / ATCC BAA-672) (Erwinia carotovora subsp. atroseptica) protein is Acyl carrier protein.